The following is a 397-amino-acid chain: uncharacterized protein (397 aa).

The next 10 helical transmembrane spans lie at 2–24, 44–66, 92–114, 124–143, 150–169, 173–195, 255–277, 297–319, 331–350, and 354–373; these read LNLL…PGIH, YIPF…SAFL, AIVL…SLFL, AFYC…FILY, SVWE…AVLY, AFNI…INNL, FIVS…VIFI, INTA…LNLS, FKFL…IIGS, and YLIY…LLAV.

The protein resides in the cell membrane. This is an uncharacterized protein from Methanocaldococcus jannaschii (strain ATCC 43067 / DSM 2661 / JAL-1 / JCM 10045 / NBRC 100440) (Methanococcus jannaschii).